The chain runs to 307 residues: Membrane protein insertase YidC 2 (307 aa).

Residues 1 to 23 form the signal peptide; sequence MKLTLNRILFSGLALSILFTLTG. C24 carries the N-palmitoyl cysteine lipid modification. A lipid anchor (S-diacylglycerol cysteine) is attached at C24. 5 helical membrane-spanning segments follow: residues 58-78, 135-155, 179-199, 209-225, and 231-251; these read LGYGLAIIIVTIIVRTLILPL, LGGIGCLPLLIQMPFFSAMYF, VLTAIIAALYFFQSWLSMMAV, TMMYTMPIMMIFMSFSL, and LYWLVGGFFSIIQQLITTYLL. Residues 263–307 form a disordered region; it reads YAKTPPKAYQSTSSRKDVTPSQNMEQANLPKKIKSNRNAGKQRKR. Residues 271-288 are compositionally biased toward polar residues; the sequence is YQSTSSRKDVTPSQNMEQ. The segment covering 293 to 307 has biased composition (basic residues); it reads KKIKSNRNAGKQRKR.

Belongs to the OXA1/ALB3/YidC family. Type 2 subfamily.

The protein resides in the cell membrane. Its function is as follows. Required for the insertion and/or proper folding and/or complex formation of integral membrane proteins into the membrane. Involved in integration of membrane proteins that insert both dependently and independently of the Sec translocase complex, as well as at least some lipoproteins. The sequence is that of Membrane protein insertase YidC 2 from Streptococcus pyogenes serotype M18 (strain MGAS8232).